We begin with the raw amino-acid sequence, 555 residues long: MYSDKKNILQLVALLRAHGVTKVVLCPGSRNAPIVHTLAGHPDFTCYSVTDERSAGFFAIGLALQGGTPAAVCCTSGTALLNLHPAIAEAYYQKVSLVVISADRPAAWINQMDGQTLPQPGVFRSLVKKSVDLPEIHTDEDEWYCNRLLNEALLELNHHGKGPVHINVPVSEPLFQFTAESLPEVRVITRYQGLNVYDRDYDGLIDRLNKYNRRMMIVGQMNLIYLFEKKYSKMLYKQFAWFTEHLGNQTVPGIPIRNFDAALYAMSPEMQEKMIPELVITYGGHIVSKRMKKYLRQHPPKEHWHVSPDGEVIDLFQGALTTIIEMDPFEFMEKIAFLLDNRTPEYPRQWENFCKELPRPELPYSEMSAIGSLIQALPASCALHLANSSAVRYAQLYSLPDTVEVCCNRGTSGIEGSLSTAIGYAAASKKLNFVVIGDLSFFYDMNALWNNHFGSNLRILLLNNGGGEIFHTLPGLEMSGTSHRFVTAVHKTSAKGWAEERGFLYQEVQDEKQLDEAMKTFTQPELLTQPVIMEVFTNKNKDARILKDYYHQLKN.

The protein belongs to the TPP enzyme family. MenD subfamily. Homodimer. It depends on Mg(2+) as a cofactor. The cofactor is Mn(2+). Thiamine diphosphate serves as cofactor.

The enzyme catalyses isochorismate + 2-oxoglutarate + H(+) = 5-enolpyruvoyl-6-hydroxy-2-succinyl-cyclohex-3-ene-1-carboxylate + CO2. It participates in quinol/quinone metabolism; 1,4-dihydroxy-2-naphthoate biosynthesis; 1,4-dihydroxy-2-naphthoate from chorismate: step 2/7. Its pathway is quinol/quinone metabolism; menaquinone biosynthesis. In terms of biological role, catalyzes the thiamine diphosphate-dependent decarboxylation of 2-oxoglutarate and the subsequent addition of the resulting succinic semialdehyde-thiamine pyrophosphate anion to isochorismate to yield 2-succinyl-5-enolpyruvyl-6-hydroxy-3-cyclohexene-1-carboxylate (SEPHCHC). This chain is 2-succinyl-5-enolpyruvyl-6-hydroxy-3-cyclohexene-1-carboxylate synthase, found in Bacteroides fragilis (strain ATCC 25285 / DSM 2151 / CCUG 4856 / JCM 11019 / LMG 10263 / NCTC 9343 / Onslow / VPI 2553 / EN-2).